The chain runs to 92 residues: Kinetoplastid membrane protein 11 (92 aa).

This sequence belongs to the KMP-11 family. In terms of assembly, monomer.

The protein localises to the cytoplasm. Its subcellular location is the cytoskeleton. Its function is as follows. May be involved in the regulation of the cytoskeleton through interaction with the subpellicular microtubules. May be involved in parasite mobility and attachment to the surface of the host cell. Behaves as a strong immunogen during infection. The chain is Kinetoplastid membrane protein 11 (KMP-11/1) from Trypanosoma brucei brucei.